The sequence spans 258 residues: Regulatory protein RecX (258 aa).

The protein belongs to the RecX family.

It localises to the cytoplasm. Its function is as follows. Modulates RecA activity. The protein is Regulatory protein RecX of Streptococcus pneumoniae (strain P1031).